A 226-amino-acid polypeptide reads, in one-letter code: ATP synthase subunit a (226 aa).

5 helical membrane-spanning segments follow: residues 17 to 37 (FLFVSHMFLAALLTLIVAKLA), 78 to 98 (LVATLGLFIFFANLMEIIPGF), 104 to 124 (NINFTLALALIVFIYYNFEGI), 175 to 195 (LFVWVLLMLAPWIVPLPGFAL), and 201 to 221 (FLQTFIFMILTYVYLAGAVLL).

The protein belongs to the ATPase A chain family. In terms of assembly, F-type ATPases have 2 components, CF(1) - the catalytic core - and CF(0) - the membrane proton channel. CF(1) has five subunits: alpha(3), beta(3), gamma(1), delta(1), epsilon(1). CF(0) has three main subunits: a(1), b(2) and c(9-12). The alpha and beta chains form an alternating ring which encloses part of the gamma chain. CF(1) is attached to CF(0) by a central stalk formed by the gamma and epsilon chains, while a peripheral stalk is formed by the delta and b chains.

The protein resides in the cell inner membrane. Its function is as follows. Key component of the proton channel; it plays a direct role in the translocation of protons across the membrane. In Nitratiruptor sp. (strain SB155-2), this protein is ATP synthase subunit a.